A 402-amino-acid chain; its full sequence is Phosphoglycerate kinase (402 aa).

Substrate-binding positions include 24-26 (DLN), arginine 39, 62-65 (HLGR), arginine 121, and arginine 161. ATP is bound by residues lysine 211, glycine 299, glutamate 330, and 359–362 (GGDS).

The protein belongs to the phosphoglycerate kinase family. In terms of assembly, monomer.

It localises to the cytoplasm. The catalysed reaction is (2R)-3-phosphoglycerate + ATP = (2R)-3-phospho-glyceroyl phosphate + ADP. The protein operates within carbohydrate degradation; glycolysis; pyruvate from D-glyceraldehyde 3-phosphate: step 2/5. This chain is Phosphoglycerate kinase, found in Mycolicibacterium gilvum (strain PYR-GCK) (Mycobacterium gilvum (strain PYR-GCK)).